The primary structure comprises 583 residues: Aspartate--tRNA ligase (583 aa).

Position 174 (Glu-174) interacts with L-aspartate. The interval Gln-198 to Lys-201 is aspartate. Arg-220 serves as a coordination point for L-aspartate. Residues Arg-220–Glu-222 and Gln-229 each bind ATP. His-443 is an L-aspartate binding site. Residue Glu-477 coordinates ATP. An L-aspartate-binding site is contributed by Arg-484. Residue Gly-529–Arg-532 participates in ATP binding.

It belongs to the class-II aminoacyl-tRNA synthetase family. Type 1 subfamily. In terms of assembly, homodimer.

The protein resides in the cytoplasm. The catalysed reaction is tRNA(Asp) + L-aspartate + ATP = L-aspartyl-tRNA(Asp) + AMP + diphosphate. Catalyzes the attachment of L-aspartate to tRNA(Asp) in a two-step reaction: L-aspartate is first activated by ATP to form Asp-AMP and then transferred to the acceptor end of tRNA(Asp). The sequence is that of Aspartate--tRNA ligase from Streptococcus thermophilus (strain CNRZ 1066).